A 407-amino-acid chain; its full sequence is Peptidase T (407 aa).

Residue H82 participates in Zn(2+) binding. D84 is an active-site residue. D143 lines the Zn(2+) pocket. E177 (proton acceptor) is an active-site residue. The Zn(2+) site is built by E178, D200, and H382.

It belongs to the peptidase M20B family. The cofactor is Zn(2+).

It is found in the cytoplasm. It carries out the reaction Release of the N-terminal residue from a tripeptide.. Cleaves the N-terminal amino acid of tripeptides. The chain is Peptidase T from Streptococcus pyogenes serotype M18 (strain MGAS8232).